Consider the following 810-residue polypeptide: Volume-regulated anion channel subunit LRRC8A (810 aa).

N-acetylmethionine is present on Met-1. The Cytoplasmic portion of the chain corresponds to 1–22 (MIPVTELRYFADTQPAYRILKP). Residues 23–47 (WWDVFTDYISIVMLMIAVFGGTLQV) traverse the membrane as a helical segment. Residues 48-123 (TQDKMICLPC…YENRLHWFAK (76 aa)) lie on the Extracellular side of the membrane. Disulfide bonds link Cys-54/Cys-310, Cys-57/Cys-65, and Cys-113/Cys-295. Residues Asn-66 and Asn-83 are each glycosylated (N-linked (GlcNAc...) asparagine). The chain crosses the membrane as a helical span at residues 124 to 142 (YFPYLVLLHTLIFLACSNF). At 143–264 (WFKFPRTSSK…EEGDIVYRLY (122 aa)) the chain is on the cytoplasmic side. Thr-200 is subject to Phosphothreonine. Ser-202 is modified (phosphoserine). Thr-215 is subject to Phosphothreonine. Ser-217 bears the Phosphoserine mark. The chain crosses the membrane as a helical span at residues 265-286 (MRQTIIKVIKFFLIICYTVYYV). The Extracellular portion of the chain corresponds to 287–316 (HNIKFDVDCTVDIESLTGYRTYRCAHPLAT). The helical transmembrane segment at 317 to 341 (LFKILASFYISLVIFYGLICMYTLW) threads the bilayer. Residues 342–810 (WMLRRSLKKY…RLWRADKEQA (469 aa)) are Cytoplasmic-facing. LRR repeat units lie at residues 399 to 422 (ENKL…RLTK), 423 to 445 (NAQD…VFDL), 447 to 468 (ELEV…IAQL), 469 to 492 (TGLK…AFLR), 493 to 515 (ENLR…IYSL), 518 to 542 (LEEL…GLRE), 543 to 565 (LKRL…VTDV), 567 to 589 (VHLQ…SLKK), 590 to 613 (MVNL…IFSL), 614 to 637 (HNLQ…SFQH), 639 to 661 (HRLT…IGNL), 662 to 684 (TNLE…LFYC), 686 to 707 (KLRY…IGLL), 708 to 730 (QNLQ…LFQC), 732 to 753 (KLRA…VGEL), 754 to 776 (TNLT…LGEC), and 778 to 801 (LLKR…VKER). The Di-leucine motif motif lies at 706–707 (LL).

This sequence belongs to the LRRC8 family. Heterohexamer; oligomerizes with other LRRC8 proteins (LRRC8B, LRRC8C, LRRC8D and/or LRRC8E) to form a heterohexamer. Can form homohexamers in vitro, but these have lower conductance than heterohexamers. Detected in a channel complex that contains LRRC8A, LRRC8C and LRRC8E. In vivo, the subunit composition may depend primarily on expression levels, and heterooligomeric channels containing various proportions of the different LRRC8 proteins may coexist. Interact with GRB2. Interacts with NOX4; this interaction prevents the ubiquitin-mediated degradation of LRRC8A. Post-translationally, N-glycosylated.

It localises to the cell membrane. Its subcellular location is the lysosome membrane. The enzyme catalyses chloride(in) = chloride(out). It carries out the reaction iodide(out) = iodide(in). It catalyses the reaction taurine(out) = taurine(in). The catalysed reaction is L-aspartate(out) = L-aspartate(in). The enzyme catalyses L-glutamate(out) = L-glutamate(in). It carries out the reaction myo-inositol(out) = myo-inositol(in). It catalyses the reaction 2',3'-cGAMP(out) = 2',3'-cGAMP(in). Its activity is regulated as follows. Inhibited by (4-[(2-butyl-6,7-dichloro-2-cyclopentyl-2,3-dihydro-1-oxo-1H-inden-5-yl)oxy]butanoic acid), which plugs the channel like a cork in a bottle by binding in the extracellular selectivity filter and sterically occluding ion conduction. Lipids may block conduction in closed heterohexameric channels. Essential component of the volume-regulated anion channel (VRAC, also named VSOAC channel), an anion channel required to maintain a constant cell volume in response to extracellular or intracellular osmotic changes. The VRAC channel conducts iodide better than chloride and can also conduct organic osmolytes like taurine. Mediates efflux of amino acids, such as aspartate and glutamate, in response to osmotic stress. In complex with LRRC8C or LRRC8E, acts as a transporter of immunoreactive cyclic dinucleotide GMP-AMP (2'-3'-cGAMP), an immune messenger produced in response to DNA virus in the cytosol: mediates both import and export of 2'-3'-cGAMP, thereby promoting transfer of 2'-3'-cGAMP to bystander cells. In contrast, complexes containing LRRC8D inhibit transport of 2'-3'-cGAMP. Required for in vivo channel activity, together with at least one other family member (LRRC8B, LRRC8C, LRRC8D or LRRC8E); channel characteristics depend on the precise subunit composition. Can form functional channels by itself (in vitro). Involved in B-cell development: required for the pro-B cell to pre-B cell transition. Also required for T-cell development. Required for myoblast differentiation: VRAC activity promotes membrane hyperpolarization and regulates insulin-stimulated glucose metabolism and oxygen consumption. Also acts as a regulator of glucose-sensing in pancreatic beta cells: VRAC currents, generated in response to hypotonicity- or glucose-induced beta cell swelling, depolarize cells, thereby causing electrical excitation, leading to increase glucose sensitivity and insulin secretion. Also plays a role in lysosome homeostasis by forming functional lysosomal VRAC channels in response to low cytoplasmic ionic strength condition: lysosomal VRAC channels are necessary for the formation of large lysosome-derived vacuoles, which store and then expel excess water to maintain cytosolic water homeostasis. Acts as a key factor in NLRP3 inflammasome activation by modulating itaconate efflux and mitochondria function. This chain is Volume-regulated anion channel subunit LRRC8A, found in Rattus norvegicus (Rat).